The following is a 91-amino-acid chain: MILIQNAEFELVHNFKDGFNEEAFKARYSDILNKYDYIVGDWGYGQLRLKGFFDDQNQKATFETKISTLDEYIYEYCNFGCAYFVLKRIRK.

A disulfide bridge links Cys-77 with Cys-81.

Homodimer, probably forms a complex with cognate toxin YutE.

In terms of biological role, probable antitoxin component of a putative type VII toxin-antitoxin (TA) system. Probably neutralizes cognate toxin YutE. The chain is Putative antitoxin YutD (yutD) from Bacillus subtilis (strain 168).